Consider the following 212-residue polypeptide: MKQLFRQWYDLSEIKKELTTRNWFPATSGNISIKVSHEPLTFLITASGKDKTKTTPDDFLLVDHLGVPVLETELRPSAETILHTHIYNNTNAGCVLHIHTTDNNVITNLYSDAVTLQNQEIIKALDIWEEGATIHIPIIENHAHIPTLGENFRKHIQGDSGAVLIRNHGITVWGRDSFDAKKRLEAYEFLFQFHIKLLSIQGGVSNGANSYS.

2 residues coordinate Zn(2+): histidine 97 and histidine 99.

The protein belongs to the aldolase class II family. MtnB subfamily. As to quaternary structure, homotetramer. It depends on Zn(2+) as a cofactor.

It carries out the reaction 5-(methylsulfanyl)-D-ribulose 1-phosphate = 5-methylsulfanyl-2,3-dioxopentyl phosphate + H2O. It participates in amino-acid biosynthesis; L-methionine biosynthesis via salvage pathway; L-methionine from S-methyl-5-thio-alpha-D-ribose 1-phosphate: step 2/6. Functionally, catalyzes the dehydration of methylthioribulose-1-phosphate (MTRu-1-P) into 2,3-diketo-5-methylthiopentyl-1-phosphate (DK-MTP-1-P). The chain is Methylthioribulose-1-phosphate dehydratase from Bacillus cereus (strain ZK / E33L).